We begin with the raw amino-acid sequence, 92 residues long: Dolichol-phosphate mannosyltransferase subunit 3 (92 aa).

Helical transmembrane passes span 8–28 and 37–57; these read LWGL…ALGL and VLWP…LGTV.

Belongs to the DPM3 family. Component of the dolichol-phosphate mannose (DPM) synthase complex composed of DPM1, DPM2 and DPM3; within the complex, associates with DPM1 via its C-terminal domain and with DPM2 via its N-terminal portion. This interaction stabilizes DPM1 protein.

The protein resides in the endoplasmic reticulum membrane. It participates in protein modification; protein glycosylation. Its function is as follows. Stabilizer subunit of the dolichol-phosphate mannose (DPM) synthase complex; tethers catalytic subunit DPM1 to the endoplasmic reticulum. The polypeptide is Dolichol-phosphate mannosyltransferase subunit 3 (DPM3) (Homo sapiens (Human)).